Consider the following 1463-residue polypeptide: Collagen alpha-1(III) chain (1463 aa).

A signal peptide spans methionine 1–alanine 23. Residues glutamine 24–proline 154 constitute a propeptide, N-terminal propeptide. A VWFC domain is found at leucine 31–proline 90. Residues proline 97–cysteine 1195 are disordered. Over residues threonine 147–phenylalanine 156 the composition is skewed to polar residues. The segment at glutamine 155–glycine 169 is nonhelical region (N-terminal). Gly residues predominate over residues glycine 164–glycine 173. The interval glycine 170–cysteine 1195 is triple-helical region. A compositionally biased stretch (pro residues) spans proline 174 to proline 184. Low complexity predominate over residues serine 186–tyrosine 198. Residues lysine 228–glutamate 240 show a composition bias toward basic and acidic residues. Positions lysine 250–proline 259 are enriched in low complexity. Lysine 262 carries the post-translational modification 5-hydroxylysine; alternate. O-linked (Gal...) hydroxylysine; alternate glycosylation is present at lysine 262. A compositionally biased stretch (basic and acidic residues) spans arginine 265 to glutamate 276. Lysine 283 bears the 5-hydroxylysine mark. Low complexity-rich tracts occupy residues proline 310 to asparagine 321 and proline 354 to glutamine 379. The span at glycine 389–glycine 398 shows a compositional bias: gly residues. Low complexity-rich tracts occupy residues proline 399–proline 429 and proline 481–lysine 502. Residues glycine 527–glycine 548 show a composition bias toward gly residues. Low complexity-rich tracts occupy residues proline 606–proline 615 and glutamine 637–asparagine 652. Over residues glycine 668–glycine 677 the composition is skewed to gly residues. Positions alanine 678–proline 691 are enriched in low complexity. The segment covering glycine 692–proline 708 has biased composition (gly residues). A compositionally biased stretch (pro residues) spans alanine 709–serine 718. A compositionally biased stretch (basic and acidic residues) spans alanine 822 to glutamate 834. Residues glycine 835–proline 849 show a composition bias toward gly residues. Lysine 859 carries the post-translational modification 5-hydroxylysine. The segment covering glycine 863–leucine 879 has biased composition (gly residues). The span at proline 889–proline 906 shows a compositional bias: pro residues. 2 stretches are compositionally biased toward low complexity: residues alanine 907–proline 934 and proline 945–proline 960. A 5-hydroxylysine modification is found at lysine 976. The segment covering proline 1045–valine 1054 has biased composition (pro residues). The segment covering proline 1068–proline 1084 has biased composition (low complexity). 2 positions are modified to 5-hydroxylysine: lysine 1093 and lysine 1105. Over residues proline 1120–proline 1132 the composition is skewed to low complexity. Positions proline 1180–proline 1192 are enriched in pro residues. A propeptide spans aspartate 1219–leucine 1463 (C-terminal propeptide). Positions glutamate 1229–leucine 1463 constitute a Fibrillar collagen NC1 domain. 3 disulfides stabilise this stretch: cysteine 1259/cysteine 1291, cysteine 1299/cysteine 1461, and cysteine 1369/cysteine 1414. Residues aspartate 1277, asparagine 1279, glutamine 1280, cysteine 1282, and aspartate 1285 each contribute to the Ca(2+) site.

The protein belongs to the fibrillar collagen family. In terms of assembly, trimers of identical alpha 1(III) chains. The chains are linked to each other by interchain disulfide bonds. Trimers are also cross-linked via hydroxylysines. Interacts with ADGRG1. Post-translationally, O-glycosylated. Prolines at the third position of the tripeptide repeating unit (G-X-Y) are hydroxylated in some or all of the chains.

It is found in the secreted. The protein localises to the extracellular space. Its subcellular location is the extracellular matrix. Functionally, collagen type III occurs in most soft connective tissues along with type I collagen. Involved in regulation of cortical development. Is the major ligand of ADGRG1 in the developing brain and binding to ADGRG1 inhibits neuronal migration and activates the RhoA pathway by coupling ADGRG1 to GNA13 and possibly GNA12. This is Collagen alpha-1(III) chain (Col3a1) from Rattus norvegicus (Rat).